The following is a 374-amino-acid chain: Anhydro-N-acetylmuramic acid kinase (374 aa).

Residue Gly-12–Asp-19 coordinates ATP.

Belongs to the anhydro-N-acetylmuramic acid kinase family.

The catalysed reaction is 1,6-anhydro-N-acetyl-beta-muramate + ATP + H2O = N-acetyl-D-muramate 6-phosphate + ADP + H(+). It participates in amino-sugar metabolism; 1,6-anhydro-N-acetylmuramate degradation. The protein operates within cell wall biogenesis; peptidoglycan recycling. In terms of biological role, catalyzes the specific phosphorylation of 1,6-anhydro-N-acetylmuramic acid (anhMurNAc) with the simultaneous cleavage of the 1,6-anhydro ring, generating MurNAc-6-P. Is required for the utilization of anhMurNAc either imported from the medium or derived from its own cell wall murein, and thus plays a role in cell wall recycling. The sequence is that of Anhydro-N-acetylmuramic acid kinase from Escherichia fergusonii (strain ATCC 35469 / DSM 13698 / CCUG 18766 / IAM 14443 / JCM 21226 / LMG 7866 / NBRC 102419 / NCTC 12128 / CDC 0568-73).